We begin with the raw amino-acid sequence, 221 residues long: Epididymal secretory glutathione peroxidase (221 aa).

A signal peptide spans methionine 1 to threonine 21. Cysteine 73 is a catalytic residue.

This sequence belongs to the glutathione peroxidase family. As to expression, epididymis.

The protein resides in the secreted. It carries out the reaction 2 glutathione + H2O2 = glutathione disulfide + 2 H2O. Functionally, protects cells and enzymes from oxidative damage, by catalyzing the reduction of hydrogen peroxide, lipid peroxides and organic hydroperoxide, by glutathione. May constitute a glutathione peroxidase-like protective system against peroxide damage in sperm membrane lipids. This chain is Epididymal secretory glutathione peroxidase (Gpx5), found in Rattus norvegicus (Rat).